Here is a 397-residue protein sequence, read N- to C-terminus: MQNYLTPNFAFAPMIPERASGSRVWDTEGREYIDFSGGIAVNALGHCHPALVDALNAQMHKLWHISNIYTTRPAQELAQKLVANSFADKVFFCNSGSEANEAALKLARKYARDRFGGGKSEIVACINSFHGRTLFTVSVGGQPKYSKDYAPLPQGITHVPFNDIAALEAAVGEQTCAVIIEPIQGESGILPATAEYLQTARRLCDRHNALLILDEVQTGMGHTGRLFAYEHYGVVPDILSSAKALGCGFPIGAMLATETIAAAFQPGTHGSTFGGNPMACAVGSRAFDIINAPETLHNVRSQGQKLQTALLDLGRKTGLFSQVRGMGLLLGCVLDAPYRGRASEITAAALKHGVMILVAGADVLRFAPSLLLNDEDTAEGLRRLEHVLTEFAAANRP.

Phe-129 is a pyridoxal 5'-phosphate binding site. Residue Arg-132 participates in N(2)-acetyl-L-ornithine binding. 214 to 217 contacts pyridoxal 5'-phosphate; that stretch reads DEVQ. Lys-243 bears the N6-(pyridoxal phosphate)lysine mark. Ser-271 contacts N(2)-acetyl-L-ornithine. Thr-272 is a binding site for pyridoxal 5'-phosphate.

This sequence belongs to the class-III pyridoxal-phosphate-dependent aminotransferase family. ArgD subfamily. As to quaternary structure, homodimer. Requires pyridoxal 5'-phosphate as cofactor.

The protein resides in the cytoplasm. It catalyses the reaction N(2)-acetyl-L-ornithine + 2-oxoglutarate = N-acetyl-L-glutamate 5-semialdehyde + L-glutamate. Its pathway is amino-acid biosynthesis; L-arginine biosynthesis; N(2)-acetyl-L-ornithine from L-glutamate: step 4/4. The chain is Acetylornithine aminotransferase from Neisseria meningitidis serogroup A / serotype 4A (strain DSM 15465 / Z2491).